Reading from the N-terminus, the 223-residue chain is Oxaloacetate tautomerase FAHD1, mitochondrial (223 aa).

The transit peptide at Met-1–Leu-30 directs the protein to the mitochondrion. Residues Glu-67, Glu-69, and Asp-98 each contribute to the Mg(2+) site.

The protein belongs to the FAH family. Requires Mg(2+) as cofactor. It depends on Mn(2+) as a cofactor.

It is found in the mitochondrion. It catalyses the reaction oxaloacetate = enol-oxaloacetate. In terms of biological role, tautomerase that converts enol-oxaloacetate, a strong inhibitor of succinate dehydrogenase, to the physiological keto form of oxaloacetate. This is Oxaloacetate tautomerase FAHD1, mitochondrial from Arabidopsis thaliana (Mouse-ear cress).